The primary structure comprises 872 residues: Paladin (872 aa).

Positions 1-37 (MGTTASAAQQVPSTVPSSENVQGNGSGSSNVEDRNSL) are disordered. G2 carries N-myristoyl glycine lipidation. A coiled-coil region spans residues 186 to 210 (RRKENLHENLHDLEKGLRAENLELA).

Belongs to the paladin family.

The protein resides in the cytoplasm. Its subcellular location is the cytosol. This Xenopus tropicalis (Western clawed frog) protein is Paladin (pald1).